Reading from the N-terminus, the 313-residue chain is 3'-5' exoribonuclease YhaM (313 aa).

One can recognise an HD domain in the interval 163–279 (HVVSMLRLAK…LHQIDLMDAS (117 aa)).

The protein belongs to the YhaM family.

Functionally, shows a 3'-5' exoribonuclease activity. This chain is 3'-5' exoribonuclease YhaM, found in Listeria welshimeri serovar 6b (strain ATCC 35897 / DSM 20650 / CCUG 15529 / CIP 8149 / NCTC 11857 / SLCC 5334 / V8).